The chain runs to 329 residues: 3-dehydroquinate synthase (329 aa).

The protein belongs to the archaeal-type DHQ synthase family.

The catalysed reaction is 2-amino-2,3,7-trideoxy-D-lyxo-hept-6-ulosonate + NAD(+) + H2O = 3-dehydroquinate + NH4(+) + NADH + H(+). Catalyzes the oxidative deamination and cyclization of 2-amino-3,7-dideoxy-D-threo-hept-6-ulosonic acid (ADH) to yield 3-dehydroquinate (DHQ), which is fed into the canonical shikimic pathway of aromatic amino acid biosynthesis. The chain is 3-dehydroquinate synthase from Methanoregula boonei (strain DSM 21154 / JCM 14090 / 6A8).